The following is a 555-amino-acid chain: 5'-nucleotidase-related protein (555 aa).

Positions 1–25 (MKSLIGTLGLYCLFILTNNVVSSYG) are cleaved as a signal peptide. A divalent metal cation-binding residues include Asp38, His40, and Asp91. Asn105 carries N-linked (GlcNAc...) asparagine glycosylation. An a divalent metal cation-binding site is contributed by Asn123. Asn198 carries an N-linked (GlcNAc...) asparagine glycan. The a divalent metal cation site is built by His225 and His249. An N-linked (GlcNAc...) asparagine glycan is attached at Asn295. 3 residues coordinate AMP: Arg358, Arg402, and Phe421. Asn465 is a glycosylation site (N-linked (GlcNAc...) asparagine). The AMP site is built by Phe505 and Asp511.

It belongs to the 5'-nucleotidase family. Mg(2+) serves as cofactor. Requires Mn(2+) as cofactor. In terms of tissue distribution, salivary gland (at protein level). Saliva (at protein level).

The protein localises to the secreted. The catalysed reaction is a ribonucleoside 5'-triphosphate + 2 H2O = a ribonucleoside 5'-phosphate + 2 phosphate + 2 H(+). With respect to regulation, DEPC (2 mM), sodium fluoride (10 mM) and 4,4'-Diisothiocyano-2,2'-stilbenedisulfonic acid (DIDS, 100 uM) nearly completely abrogate activity. Concanavalin A enhances activity. Functionally, facilitates hematophagy by inhibiting ADP-dependent platelet aggregation and promoting disaggregation of ADP-stimulated platelets in the host. Cleaves adenosine triphosphate (ATP) and adenosine diphosphate (ADP) to adenosine monophosphate (AMP) and inorganic phosphate. Interacts with fibrinogen receptor integrin alpha-IIb/beta-3 (ITGA2B/ITGB3). The sequence is that of 5'-nucleotidase-related protein from Glossina morsitans morsitans (Savannah tsetse fly).